The sequence spans 966 residues: MSSFVNLESLISERGANCRGADEIVNNETTRILTSQIEHSQRSKKVNIRNKLSVAECDAFRARYGGAFDVNLTHEYTAPHSLAGALRVAEHYDCIDSFPPEDKIIDFGGSWLHHYSRGDSRVHSCCPILGPRDATRHEERMCRLRKMVQTSDRFVDVPDFCLNKAEDCNVQADWAICIHGGYDMGFQGLCKAMHAPLERGILQGTIMFDGAMLFDRQGELPLLQCRWQRVGTGSKEQIKFDFINESTLSYVHDWKNLGSFLTESTYSIGGTTYLLERMLLKCSIMTYKIIATNVRCPPESLRHCIWFENISQYLAVQIPIGYNLNDWKTVRVARATVREVEEISFRCFKENKDWTENMRSVASILSAKSSTVIINGQSIMSGERLDVLEYHLVAFSLTLNLYQKYEKLRNFQGELEWKGWANHFKTRLWWCGRTVSTEGGFLRNFLADKIPWLKLNTYADSLDFITKISEVESFEVDSVPTSRLRSFFQKEENIVERAASEIMSANARRIAKKAEMSKEFDDFVDAPEEFAPEDVVEEVINTPVTQDVKLRQSKPETARSIVLDPDAVLKNGAINEFADYSKRLHENTVSNLRHLWTLMGCRGNEIHNKSVAETYHRVDDMVNVHFPNGHWMYPLKYEYTVGYNDGGLGEKFENELYVVDKTCSCANAKAIADACKKVSAPTCSVVMVDGVAGCGKTTAIKETFRFEKDIIVTANRKSAEDVRKAIFGDASDSEVALKVVRTADSAIMHGLPECHRLLVDEAGLLHYGQLLAVADLCKCSEVLAFGDTEQISFKSRDATFRMKYCNIEYDKRDIVSKTFRCPQDVVSAVKILKRKCANRSSKYNGWVSSSKVEKSLSKSRIVSINQVSMEKHKFYLTMTEADKAALCSRAKDVGLDKTWVESNMETVHEAQGKAVDHVVLVRLKSTKCDLFKSEEYCLVALTRHKRTFEYLYNGDLGGDLISFYVT.

The tract at residues R49 to S381 is methyltransferase. Residues N71–L261 enclose the Alphavirus-like MT domain. Residues D660–V815 enclose the (+)RNA virus helicase ATP-binding domain. Residues M687–L951 form an ATP-dependent helicase region. G690 to T697 lines the ATP pocket. Positions S816–T966 constitute a (+)RNA virus helicase C-terminal domain.

Belongs to the bromoviridae replication protein 1a family.

Its subcellular location is the host endoplasmic reticulum membrane. Involved in the virus replication. Contains a helicase domain and a methyltransferase domain. The methyltransferase domain is probably involved in viral RNA capping. The polypeptide is Replication protein 1a (Vicia faba (Broad bean)).